Reading from the N-terminus, the 329-residue chain is MVRAKSWTLKKHFVGYPTPSNFELKTVELPPLKNGEVLLEALFLTVDPYMRIAARKLKEGDMMMGEQVARVIESKNAAFPTGTIVVALLGWTTHSISDGKNLERLLAEWPDTLPLSLTLGTVGMPGLTAYFGLLDICGLKGGETVMVNAAAGAVGSVVGQIAKLKGCKVVGAAGSDEKVACLKKYGFDVAFNYKTIESLEETLKKASPEGYDCYFDNVGGEFSNAVTSQMKKFGRIAICGAISTYNRTGPPPPGPPPEVVIYNELCFQGFIVTRWQGEVRQKALRDLLKWVSEGKIQYHEHITEGFENMPAAFMGMLKGENLGKAIVKA.

Residue T18 is modified to Phosphothreonine. S20 is subject to Phosphoserine. NADP(+) contacts are provided by residues 152–155, K178, Y193, N217, 239–245, 270–272, and N321; these read GAVG, CGAISTY, and FIV. K178 carries the N6-(2-hydroxyisobutyryl)lysine; alternate modification. The residue at position 178 (K178) is an N6-acetyllysine; alternate.

It belongs to the NADP-dependent oxidoreductase L4BD family. In terms of assembly, monomer or homodimer. In terms of tissue distribution, ubiquitously distributed in various tissues and leukocytes, the kidney and liver had the highest enzyme activities.

The protein resides in the cytoplasm. The enzyme catalyses 13,14-dihydro-15-oxo-prostaglandin E1 + NADP(+) = 15-oxoprostaglandin E1 + NADPH + H(+). The catalysed reaction is 13,14-dihydro-15-oxo-prostaglandin E2 + NADP(+) = 15-oxoprostaglandin E2 + NADPH + H(+). It catalyses the reaction 13,14-dihydro-15-oxo-prostaglandin E2 + NAD(+) = 15-oxoprostaglandin E2 + NADH + H(+). It carries out the reaction 13,14-dihydro-15-oxo-prostaglandin F1alpha + NADP(+) = 15-oxoprostaglandin F1alpha + NADPH + H(+). The enzyme catalyses 13,14-dihydro-15-oxo-PGF2alpha + NADP(+) = 15-oxoprostaglandin F2alpha + NADPH + H(+). The catalysed reaction is leukotriene B4 + NADP(+) = 12-oxo-leukotriene B4 + NADPH + H(+). It catalyses the reaction 20-hydroxy-leukotriene B4 + NADP(+) = 12-oxo-20-hydroxy-leukotriene B4 + NADPH + H(+). It carries out the reaction 6-trans-leukotriene B4 + NADP(+) = 12-oxo-(5S)-hydroxy-(6E,8E,10E,14Z)-eicosatetraenoate + NADPH + H(+). The enzyme catalyses (5S,12S)-dihydroxy-(6E,10E,12E,14Z)-eicosatetraenoate + NADP(+) = 12-oxo-(5S)-hydroxy-(6E,8E,10E,14Z)-eicosatetraenoate + NADPH + H(+). The catalysed reaction is 15-oxo-(5S,6R)-dihydroxy-(7E,9E,11Z,13E)-eicosatetraenoate + NADH + H(+) = 15-oxo-(5S,6R)-dihydroxy-(7E,9E,11Z)-eicosatrienoate + NAD(+). It catalyses the reaction an n-alkanal + NADP(+) = an alk-2-enal + NADPH + H(+). It carries out the reaction hexanal + NADP(+) = (E)-hex-2-enal + NADPH + H(+). The enzyme catalyses octanal + NADP(+) = (2E)-octenal + NADPH + H(+). The catalysed reaction is decanal + NADP(+) = (2E)-decenal + NADPH + H(+). It catalyses the reaction dodecanal + NADP(+) = (2E)-dodecenal + NADPH + H(+). It carries out the reaction 4-hydroxynonanal + NADP(+) = (E)-4-hydroxynon-2-enal + NADPH + H(+). The enzyme catalyses pentan-2-one + NADP(+) = (E)-pent-3-en-2-one + NADPH + H(+). The catalysed reaction is nonan-2-one + NADP(+) = (3E)-nonen-2-one + NADPH + H(+). With respect to regulation, down-regulated by nonsteroidal anti-inflammatory drugs diclofenac, indomethacin and niflumic acid. Functionally, NAD(P)H-dependent oxidoreductase involved in metabolic inactivation of pro- and anti-inflammatory eicosanoids: prostaglandins (PG), leukotrienes (LT) and lipoxins (LX). Preferentially uses NADPH over NADH as cofactor. Catalyzes with high efficiency the reduction of the 13,14 double bond of 15-oxoPGs, including 15-oxo-PGE1, 15-oxo-PGE2, 15-oxo-PGF1-alpha and 15-oxo-PGF2-alpha. Catalyzes with lower efficiency the oxidation of the hydroxyl group at C12 of LTB4 and its derivatives, converting them into biologically less active 12-oxo-LTB4 metabolites. Reduces 15-oxo-LXA4 to 13,14 dihydro-15-oxo-LXA4 and may promote neutrophil recruitment at the inflammatory site. Plays a role in metabolic detoxification of alkenals and ketones. Reduces alpha,beta-unsaturated alkenals and ketones, particularly those with medium-chain length, showing highest affinity toward (2E)-decenal and (3E)-3-nonen-2-one. May inactivate 4-hydroxy-2-nonenal, a cytotoxic lipid constituent of oxidized low-density lipoprotein particles. The sequence is that of Prostaglandin reductase 1 (PTGR1) from Sus scrofa (Pig).